A 164-amino-acid chain; its full sequence is ATP synthase subunit b 1 (164 aa).

A helical transmembrane segment spans residues 8 to 28 (PETWVAVAFVILMGVFAYFGV).

It belongs to the ATPase B chain family. As to quaternary structure, F-type ATPases have 2 components, F(1) - the catalytic core - and F(0) - the membrane proton channel. F(1) has five subunits: alpha(3), beta(3), gamma(1), delta(1), epsilon(1). F(0) has three main subunits: a(1), b(2) and c(10-14). The alpha and beta chains form an alternating ring which encloses part of the gamma chain. F(1) is attached to F(0) by a central stalk formed by the gamma and epsilon chains, while a peripheral stalk is formed by the delta and b chains.

The protein resides in the cell inner membrane. Functionally, f(1)F(0) ATP synthase produces ATP from ADP in the presence of a proton or sodium gradient. F-type ATPases consist of two structural domains, F(1) containing the extramembraneous catalytic core and F(0) containing the membrane proton channel, linked together by a central stalk and a peripheral stalk. During catalysis, ATP synthesis in the catalytic domain of F(1) is coupled via a rotary mechanism of the central stalk subunits to proton translocation. Its function is as follows. Component of the F(0) channel, it forms part of the peripheral stalk, linking F(1) to F(0). This chain is ATP synthase subunit b 1, found in Rhodopseudomonas palustris (strain BisB18).